Here is a 517-residue protein sequence, read N- to C-terminus: FAD-dependent monooxygenase dmxR9 (517 aa).

Residues V96 and R162 each coordinate FAD. Catalysis depends on residues R243 and Y270. Residues D365 and A378 each coordinate FAD.

This sequence belongs to the paxM FAD-dependent monooxygenase family. It depends on FAD as a cofactor.

It participates in secondary metabolite biosynthesis. In terms of biological role, FAD-dependent monooxygenase; part of the gene cluster that mediates the biosynthesis of the dimeric xanthones cryptosporioptides. The pathway begins with the synthesis of atrochrysone thioester by the polyketide synthase dmx-nrPKS. The atrochrysone carboxyl ACP thioesterase dmxR1 then breaks the thioester bond and releases the atrochrysone carboxylic acid from dmx-nrPKS. Atrochrysone carboxylic acid is decarboxylated by the decarboxylase dmxR15, and oxidized by the anthrone oxygenase dmxR16 to yield emodin. Emodin is then reduced to emodin hydroquinone by the oxidoreductase dmxR7. A-ring reduction by the short chain dehydrogenase dmxR18, dehydration by the scytalone dehydratase-like protein dmxR17 and probable spontaneous re-oxidation, results in overall deoxygenation to chrysophanol. Baeyer-Villiger oxidation by the Baeyer-Villiger monooxygenase (BVMO) dmxR6 then yields monodictylactone in equilibrium with monodictyphenone. In the case of the cryptosporioptides biosynthesis, monodictylactone is reduced at C-12 to an alcohol (by the short chain dehydrogenases dmxR12 or dmxR8) and hydroxylated at C-5 by dmxR9, yielding the electron-rich aromatic which could eliminate H(2)O to form the ortho-quinonemethide, followed by tautomerisation to paraquinone and complete the formal reduction to produce the 10-methylgroup. Conjugate addition of C-4a-OH to the resulting paraquinone by the monooxygenase dmxR10 then gives cyclohexadienone, which is then reduced at C-5 by the short chain dehydrogenase dmxR3 to give the dihydroxanthone. The 6,7-epoxide in the cryptosporioptides could be introduced by the cytochrome P450 monooxygenase dmxL3. The highly reducing PKS dmxL2 manufactures butyrate, which is further carboxylated by dmxL1 to form ethylmalonate. It is not yet clear whether the carboxylation occurs while the butyrate is attached to the ACP of dmxL2, but this unusual fungal metabolite could then be esterified to O-5 by the O-acetyltransferase dmxR13. Finally, dimerization performed by dmxR5 gives the observed dimers cryptosporioptides A, B and C as the final products of the pathway. The protein is FAD-dependent monooxygenase dmxR9 of Cryptosporiopsis sp. (strain 8999).